The primary structure comprises 100 residues: NADH-quinone oxidoreductase subunit K (100 aa).

Helical transmembrane passes span 1-21 (MIGLNHYLIVSGLLFCIGLAG), 28-48 (ILLLFFSTEIMLNAINIGFIA), and 64-84 (FIIAIAASEVAIGLGLVILWF).

The protein belongs to the complex I subunit 4L family. As to quaternary structure, NDH-1 is composed of 14 different subunits. Subunits NuoA, H, J, K, L, M, N constitute the membrane sector of the complex.

It is found in the cell inner membrane. It carries out the reaction a quinone + NADH + 5 H(+)(in) = a quinol + NAD(+) + 4 H(+)(out). In terms of biological role, NDH-1 shuttles electrons from NADH, via FMN and iron-sulfur (Fe-S) centers, to quinones in the respiratory chain. The immediate electron acceptor for the enzyme in this species is believed to be ubiquinone. Couples the redox reaction to proton translocation (for every two electrons transferred, four hydrogen ions are translocated across the cytoplasmic membrane), and thus conserves the redox energy in a proton gradient. This is NADH-quinone oxidoreductase subunit K from Helicobacter acinonychis (strain Sheeba).